Here is a 127-residue protein sequence, read N- to C-terminus: Dual endothelin-1/VEGF signal peptide receptor (127 aa).

The Extracellular portion of the chain corresponds to methionine 1–serine 65. The helical transmembrane segment at isoleucine 66–serine 84 threads the bilayer. At lysine 85 to histidine 127 the chain is on the cytoplasmic side.

In terms of tissue distribution, widely expressed with higher levels in kidney and aorta.

The protein localises to the cell membrane. Dual receptor for both endothelin-1 and the signal sequence of vascular endothelial growth factor A. Does not act as a receptor for angiotensin-2. Does not bind the VEGFA mature protein. May play a role in angiogenesis with a significant role in cardiovascular and neural development. The protein is Dual endothelin-1/VEGF signal peptide receptor of Mus musculus (Mouse).